Consider the following 256-residue polypeptide: MAFTLTNKNVIFVAGLGGIGLDTSKELLKRDLKNLVILDRIENPAAIAELKAINPKVTVTFYPYDVTVPIAETTKLLKTIFAKLKTVDVLINGAGILDDHQIERTIAVNYTGLVNTTTAILDFWDKRKGGPGGIICNIGSVTGFNAIYQVPVYSGTKAAVVNFTSSLAKLAPITGVTAYTVNPGITRTTLVHKFNSWLDVEPQVAEKLLAHPTQPSLACAENFVKAIELNQNGAIWKLDLGTLEAIQWTKHWDSGI.

An NAD(+)-binding site is contributed by 12–35; that stretch reads FVAGLGGIGLDTSKELLKRDLKNL. S140 is a binding site for substrate. Y153 functions as the Proton acceptor in the catalytic mechanism.

This sequence belongs to the short-chain dehydrogenases/reductases (SDR) family. In terms of assembly, homodimer.

The catalysed reaction is a primary alcohol + NAD(+) = an aldehyde + NADH + H(+). It catalyses the reaction a secondary alcohol + NAD(+) = a ketone + NADH + H(+). In Drosophila sechellia (Fruit fly), this protein is Alcohol dehydrogenase (Adh).